The sequence spans 357 residues: MRKIIHCDCDCFYAAIEMRDDPRLVGRPLAVGGRPERRGVVATCNYEARKFGIHSAMPMAQAVKRCPDLLIVPPAMDKYRQVARQIFAIYQGYTPLVEPLSLDEAYLDVTDSPMLAGSGTRIAEDIRRRVREEIGITVSAGVAPNKFIAKIASDWNKPDGLFVVRPEQVDAFVAALPVERLFGVGKVTAAKLRRLGAQTCGDLRGWGADRLQQHFGSFGFRLHDLCRGIDHRQVQPSQIRKSVSVEETYATDLRTLDDCQRELTILVDQLAARVERARAGDMIHKTFVKLRFADFRGTTVECVYPQVALPVFNRLLAQGFERRRMPVRLLGVGVRLHETDAHARQQALFAEGPPPGA.

The UmuC domain occupies Ile-4 to Gly-185. Mg(2+) is bound by residues Asp-8 and Asp-103. The active site involves Glu-104.

The protein belongs to the DNA polymerase type-Y family. Monomer. Mg(2+) serves as cofactor.

It localises to the cytoplasm. The catalysed reaction is DNA(n) + a 2'-deoxyribonucleoside 5'-triphosphate = DNA(n+1) + diphosphate. Functionally, poorly processive, error-prone DNA polymerase involved in untargeted mutagenesis. Copies undamaged DNA at stalled replication forks, which arise in vivo from mismatched or misaligned primer ends. These misaligned primers can be extended by PolIV. Exhibits no 3'-5' exonuclease (proofreading) activity. May be involved in translesional synthesis, in conjunction with the beta clamp from PolIII. This chain is DNA polymerase IV, found in Ralstonia nicotianae (strain ATCC BAA-1114 / GMI1000) (Ralstonia solanacearum).